Here is an 876-residue protein sequence, read N- to C-terminus: AP-5 complex subunit beta-1 (876 aa).

In terms of assembly, probably part of the adaptor protein complex 5 (AP-5), a tetramer composed of AP5B1, AP5M1, AP5S1 and AP5Z1. Interacts with ZFYVE26 and SPG11.

As part of AP-5, a probable fifth adaptor protein complex, it may be involved in endosomal transport. This Rattus norvegicus (Rat) protein is AP-5 complex subunit beta-1 (Ap5b1).